A 77-amino-acid chain; its full sequence is Conotoxin LiC42 (77 aa).

Residues 1–22 (MKLTCVLIIAVLFLTASQLITA) form the signal peptide. A propeptide spanning residues 23–47 (DYSRDKQEYGAERLRDAMGKFKGSR) is cleaved from the precursor. 3 disulfide bridges follow: Cys-49–Cys-62, Cys-56–Cys-67, and Cys-61–Cys-76.

This sequence belongs to the conotoxin O1 superfamily. As to expression, expressed by the venom duct.

The protein resides in the secreted. In Conus lividus (Livid cone), this protein is Conotoxin LiC42.